The sequence spans 246 residues: Zinc import ATP-binding protein ZnuC (246 aa).

Positions 24–243 constitute an ABC transporter domain; it reads LKIENLALAY…RTLNEIFSSY (220 aa). 56–63 contacts ATP; that stretch reads GPNGGGKT.

It belongs to the ABC transporter superfamily. Zinc importer (TC 3.A.1.15.5) family. As to quaternary structure, the complex is composed of two ATP-binding proteins (ZnuC), two transmembrane proteins (ZnuB) and a solute-binding protein (ZnuA).

It localises to the cell membrane. The catalysed reaction is Zn(2+)(out) + ATP(in) + H2O(in) = Zn(2+)(in) + ADP(in) + phosphate(in) + H(+)(in). Its function is as follows. Part of the ABC transporter complex ZnuABC involved in zinc import. Responsible for energy coupling to the transport system. This Wolbachia pipientis wMel protein is Zinc import ATP-binding protein ZnuC.